Consider the following 747-residue polypeptide: NAD(P)H-quinone oxidoreductase subunit 5, chloroplastic (747 aa).

16 consecutive transmembrane segments (helical) span residues 8–28, 39–59, 89–109, 125–145, 147–167, 185–205, 231–251, 259–279, 281–301, 328–348, 355–375, 397–417, 426–446, 550–570, 608–628, and 726–746; these read AWII…ELLL, IWAF…TKLA, IDPL…MVLI, FAYM…PNLI, IHIF…FWFT, GDFG…SFEF, AFLL…HVWL, TPIS…FLVA, LLPL…IGVI, LGYM…FHLI, ALLF…VGYS, TTFF…CFWS, WLYS…TAFY, LFPL…GIHF, FYSV…YGSV, and LFLY…YNFL.

It belongs to the complex I subunit 5 family. In terms of assembly, NDH is composed of at least 16 different subunits, 5 of which are encoded in the nucleus.

It is found in the plastid. It localises to the chloroplast thylakoid membrane. The catalysed reaction is a plastoquinone + NADH + (n+1) H(+)(in) = a plastoquinol + NAD(+) + n H(+)(out). It carries out the reaction a plastoquinone + NADPH + (n+1) H(+)(in) = a plastoquinol + NADP(+) + n H(+)(out). Its function is as follows. NDH shuttles electrons from NAD(P)H:plastoquinone, via FMN and iron-sulfur (Fe-S) centers, to quinones in the photosynthetic chain and possibly in a chloroplast respiratory chain. The immediate electron acceptor for the enzyme in this species is believed to be plastoquinone. Couples the redox reaction to proton translocation, and thus conserves the redox energy in a proton gradient. This chain is NAD(P)H-quinone oxidoreductase subunit 5, chloroplastic (ndhF), found in Nymphaea alba (White water-lily).